A 434-amino-acid polypeptide reads, in one-letter code: Na(+)/H(+) antiporter NhaA 1 (434 aa).

Over residues M1–P15 the composition is skewed to pro residues. A disordered region spans residues M1 to G21. 12 helical membrane passes run G34–A54, L74–L94, A112–I132, G143–G163, F173–Y193, G196–V216, A222–I242, T245–V265, I294–L314, I326–A346, V362–L382, and A393–L413.

The protein belongs to the NhaA Na(+)/H(+) (TC 2.A.33) antiporter family.

The protein localises to the cell membrane. The enzyme catalyses Na(+)(in) + 2 H(+)(out) = Na(+)(out) + 2 H(+)(in). Na(+)/H(+) antiporter that extrudes sodium in exchange for external protons. The sequence is that of Na(+)/H(+) antiporter NhaA 1 from Clavibacter michiganensis subsp. michiganensis (strain NCPPB 382).